The primary structure comprises 136 residues: Protein PsiE (136 aa).

A run of 4 helical transmembrane segments spans residues 15–35 (ILQT…VVFL), 55–75 (YELV…ALIV), 82–102 (FHFP…RLII), and 108–128 (PLDV…LWLC).

Belongs to the PsiE family.

Its subcellular location is the cell inner membrane. The polypeptide is Protein PsiE (Escherichia coli (strain UTI89 / UPEC)).